A 455-amino-acid polypeptide reads, in one-letter code: Bifunctional protein GlmU (455 aa).

The tract at residues 1 to 228 (MNNTLTTIIL…EFEIEGVNNR (228 aa)) is pyrophosphorylase. UDP-N-acetyl-alpha-D-glucosamine contacts are provided by residues 10–13 (LAAG), Lys24, Gln75, 80–81 (GT), 102–104 (YGD), Gly138, Glu153, Asn168, and Asn226. Position 104 (Asp104) interacts with Mg(2+). Asn226 lines the Mg(2+) pocket. The linker stretch occupies residues 229–249 (QQLAQLERKWQAKLVEDLQVQ). Residues 250-455 (GVQFADPNRV…DNYQRPEKKK (206 aa)) form an N-acetyltransferase region. Residues Arg332 and Lys350 each contribute to the UDP-N-acetyl-alpha-D-glucosamine site. The Proton acceptor role is filled by His362. UDP-N-acetyl-alpha-D-glucosamine-binding residues include Tyr365 and Asn376. Acetyl-CoA is bound by residues Ala379, 385–386 (NY), Ala422, and Arg439.

This sequence in the N-terminal section; belongs to the N-acetylglucosamine-1-phosphate uridyltransferase family. The protein in the C-terminal section; belongs to the transferase hexapeptide repeat family. In terms of assembly, homotrimer. The cofactor is Mg(2+).

Its subcellular location is the cytoplasm. It catalyses the reaction alpha-D-glucosamine 1-phosphate + acetyl-CoA = N-acetyl-alpha-D-glucosamine 1-phosphate + CoA + H(+). It carries out the reaction N-acetyl-alpha-D-glucosamine 1-phosphate + UTP + H(+) = UDP-N-acetyl-alpha-D-glucosamine + diphosphate. It functions in the pathway nucleotide-sugar biosynthesis; UDP-N-acetyl-alpha-D-glucosamine biosynthesis; N-acetyl-alpha-D-glucosamine 1-phosphate from alpha-D-glucosamine 6-phosphate (route II): step 2/2. It participates in nucleotide-sugar biosynthesis; UDP-N-acetyl-alpha-D-glucosamine biosynthesis; UDP-N-acetyl-alpha-D-glucosamine from N-acetyl-alpha-D-glucosamine 1-phosphate: step 1/1. Its pathway is bacterial outer membrane biogenesis; LPS lipid A biosynthesis. In terms of biological role, catalyzes the last two sequential reactions in the de novo biosynthetic pathway for UDP-N-acetylglucosamine (UDP-GlcNAc). The C-terminal domain catalyzes the transfer of acetyl group from acetyl coenzyme A to glucosamine-1-phosphate (GlcN-1-P) to produce N-acetylglucosamine-1-phosphate (GlcNAc-1-P), which is converted into UDP-GlcNAc by the transfer of uridine 5-monophosphate (from uridine 5-triphosphate), a reaction catalyzed by the N-terminal domain. This is Bifunctional protein GlmU from Psychrobacter sp. (strain PRwf-1).